Here is a 1170-residue protein sequence, read N- to C-terminus: Anion exchange protein 3 (1170 aa).

Over 1–656 the chain is Cytoplasmic; the sequence is MGRSYNEKDF…DLKDALDTQC (656 aa). Disordered regions lie at residues 17–96, 112–167, and 239–267; these read FHHT…PQLS, FHME…TTRG, and HLVK…RRKR. The span at 32 to 53 shows a compositional bias: basic residues; that stretch reads RFRKRVLSMDRRRKRKRKKKKT. Acidic residues predominate over residues 67–76; the sequence is VDEEEAESEI. The segment covering 246 to 259 has biased composition (polar residues); it reads RCQLPRSSNGSPPL. A run of 5 helical transmembrane segments spans residues 657 to 677, 702 to 722, 744 to 764, 774 to 794, and 828 to 848; these read IAAV…FGGL, FSLL…LLVF, IGFW…SFLV, IFAF…LIKV, and PNTA…AFFL. Residues 657-1170 are membrane (anion exchange); it reads IAAVIFIYFA…DEYNEIHMLV (514 aa). The Cytoplasmic portion of the chain corresponds to 849–863; that stretch reads RKLRNSRFLGGKVRR. Transmembrane regions (helical) follow at residues 864–884, 919–939, 966–986, 1020–1063, and 1104–1124; these read VIGD…DILI, FPVW…ILIF, LLLI…WLTA, RVTG…LTGI, and IVLL…FILI.

This sequence belongs to the anion exchanger (TC 2.A.31) family. As to expression, widely expressed at low levels.

It is found in the cell membrane. It carries out the reaction hydrogencarbonate(in) + chloride(out) = hydrogencarbonate(out) + chloride(in). Sodium-independent anion exchanger which mediates the electroneutral exchange of chloride for bicarbonate ions across the cell membrane. May be involved in the regulation of intracellular pH, and the modulation of cardiac action potential. This is Anion exchange protein 3 from Danio rerio (Zebrafish).